The primary structure comprises 428 residues: Homoserine dehydrogenase (428 aa).

5 residues coordinate NADPH: Phe-10, Thr-12, Val-13, Arg-44, and Lys-106. Residue Val-13 participates in NAD(+) binding. The NADP(+) site is built by Val-13, Arg-44, and Lys-106. Residues Glu-130, Val-133, Gly-135, and Ile-137 each contribute to the Na(+) site. NADP(+)-binding residues include Gly-188 and Glu-191. Residues Glu-191 and Asp-202 each contribute to the L-homoserine site. Lys-206 serves as the catalytic Proton donor. Gly-303 serves as a coordination point for NADPH. Gly-303 contacts NAD(+). Gly-303 contacts NADP(+). An ACT domain is found at 351–425 (YFSVETPDST…DFKLLNYFKV (75 aa)).

It belongs to the homoserine dehydrogenase family. It depends on a metal cation as a cofactor.

It catalyses the reaction L-homoserine + NADP(+) = L-aspartate 4-semialdehyde + NADPH + H(+). It carries out the reaction L-homoserine + NAD(+) = L-aspartate 4-semialdehyde + NADH + H(+). It functions in the pathway amino-acid biosynthesis; L-methionine biosynthesis via de novo pathway; L-homoserine from L-aspartate: step 3/3. The protein operates within amino-acid biosynthesis; L-threonine biosynthesis; L-threonine from L-aspartate: step 3/5. Its function is as follows. Catalyzes the conversion of L-aspartate-beta-semialdehyde (L-Asa) to L-homoserine (L-Hse), the third step in the biosynthesis of threonine and methionine from aspartate. This chain is Homoserine dehydrogenase (hom), found in Lactococcus lactis subsp. lactis (strain IL1403) (Streptococcus lactis).